Reading from the N-terminus, the 308-residue chain is Aspartate carbamoyltransferase catalytic subunit (308 aa).

Positions 51 and 52 each coordinate carbamoyl phosphate. K80 is an L-aspartate binding site. Residues R101, H129, and Q132 each contribute to the carbamoyl phosphate site. Residues R162 and R224 each contribute to the L-aspartate site. Positions 263 and 264 each coordinate carbamoyl phosphate.

Belongs to the aspartate/ornithine carbamoyltransferase superfamily. ATCase family. In terms of assembly, heterododecamer (2C3:3R2) of six catalytic PyrB chains organized as two trimers (C3), and six regulatory PyrI chains organized as three dimers (R2).

It catalyses the reaction carbamoyl phosphate + L-aspartate = N-carbamoyl-L-aspartate + phosphate + H(+). The protein operates within pyrimidine metabolism; UMP biosynthesis via de novo pathway; (S)-dihydroorotate from bicarbonate: step 2/3. In terms of biological role, catalyzes the condensation of carbamoyl phosphate and aspartate to form carbamoyl aspartate and inorganic phosphate, the committed step in the de novo pyrimidine nucleotide biosynthesis pathway. The chain is Aspartate carbamoyltransferase catalytic subunit from Bacteroides fragilis (strain ATCC 25285 / DSM 2151 / CCUG 4856 / JCM 11019 / LMG 10263 / NCTC 9343 / Onslow / VPI 2553 / EN-2).